Reading from the N-terminus, the 686-residue chain is Rhophilin-2 (686 aa).

One can recognise an REM-1 domain in the interval 26–100 (NPLAQTGRSK…LEGLNISVGV (75 aa)). Positions 46–66 (QILKAMRMRTGAENLLKAATN) are interaction with Rho. The 350-residue stretch at 111-460 (PLIPLGLKET…QLKYTQLRED (350 aa)) folds into the BRO1 domain. The PDZ domain maps to 515 to 593 (RSIHFTAEEG…DDIEMKVVSL (79 aa)). At threonine 655 the chain carries Phosphothreonine.

Belongs to the RHPN family. Interacts with GTP-bound RhoA and RhoB. Interacts with both GTP- and GDP-bound RhoA. Interacts with KRT18.

The protein resides in the cytoplasm. The protein localises to the perinuclear region. Binds specifically to GTP-Rho. May function in a Rho pathway to limit stress fiber formation and/or increase the turnover of F-actin structures in the absence of high levels of RhoA activity. This Bos taurus (Bovine) protein is Rhophilin-2 (RHPN2).